The following is a 354-amino-acid chain: Elongation factor Ts (354 aa).

The segment at 81–84 (TDFV) is involved in Mg(2+) ion dislocation from EF-Tu.

Belongs to the EF-Ts family.

It is found in the cytoplasm. In terms of biological role, associates with the EF-Tu.GDP complex and induces the exchange of GDP to GTP. It remains bound to the aminoacyl-tRNA.EF-Tu.GTP complex up to the GTP hydrolysis stage on the ribosome. This chain is Elongation factor Ts, found in Campylobacter concisus (strain 13826).